A 399-amino-acid chain; its full sequence is S-adenosylmethionine synthase (399 aa).

An ATP-binding site is contributed by His-17. Asp-19 is a Mg(2+) binding site. Glu-45 lines the K(+) pocket. L-methionine contacts are provided by Glu-58 and Gln-101. Positions 101–111 are flexible loop; the sequence is QSADIAMGVDQ. ATP is bound by residues 177-179, 244-245, Asp-253, 259-260, Ala-276, and Lys-280; these read DGK, RF, and RK. An L-methionine-binding site is contributed by Asp-253. Residue Lys-284 coordinates L-methionine.

This sequence belongs to the AdoMet synthase family. As to quaternary structure, homotetramer; dimer of dimers. Mg(2+) is required as a cofactor. It depends on K(+) as a cofactor.

Its subcellular location is the cytoplasm. It catalyses the reaction L-methionine + ATP + H2O = S-adenosyl-L-methionine + phosphate + diphosphate. Its pathway is amino-acid biosynthesis; S-adenosyl-L-methionine biosynthesis; S-adenosyl-L-methionine from L-methionine: step 1/1. Its function is as follows. Catalyzes the formation of S-adenosylmethionine (AdoMet) from methionine and ATP. The overall synthetic reaction is composed of two sequential steps, AdoMet formation and the subsequent tripolyphosphate hydrolysis which occurs prior to release of AdoMet from the enzyme. The protein is S-adenosylmethionine synthase of Bacillus thuringiensis subsp. konkukian (strain 97-27).